We begin with the raw amino-acid sequence, 308 residues long: Probable manganese-dependent inorganic pyrophosphatase (308 aa).

Mn(2+) is bound by residues H9, D13, D15, D75, H97, and D149.

The protein belongs to the PPase class C family. The cofactor is Mn(2+).

The protein resides in the cytoplasm. The catalysed reaction is diphosphate + H2O = 2 phosphate + H(+). This Listeria monocytogenes serotype 4b (strain CLIP80459) protein is Probable manganese-dependent inorganic pyrophosphatase.